Consider the following 53-residue polypeptide: Beta-defensin C7 (53 aa).

Cystine bridges form between Cys-20–Cys-49, Cys-27–Cys-42, and Cys-32–Cys-50.

It belongs to the beta-defensin family.

It localises to the secreted. Has bactericidal activity. The chain is Beta-defensin C7 from Bos taurus (Bovine).